A 655-amino-acid polypeptide reads, in one-letter code: RalA-binding protein 1-A (655 aa).

The disordered stretch occupies residues 1-153; it reads MTECFLPPAS…KKSKDLTAAD (153 aa). Residues 52 to 68 are compositionally biased toward basic and acidic residues; the sequence is DILHEPPDIVSEDEKDH. 69–74 is a binding site for ATP; the sequence is GKKKGK. Basic residues-rich tracts occupy residues 69 to 79 and 102 to 118; these read GKKKGKFKKKE and KIKR…PSFS. The nuclear localization signal stretch occupies residues 102-119; sequence KIKRSKGIHVFKKPSFSK. Over residues 119-150 the composition is skewed to basic and acidic residues; sequence KKKEKDFKIKEKPKEEKHKEDKHKEKKSKDLT. Repeat copies occupy residues 133-137 and 138-142. A 2 X 5 AA tandem repeats of E-[D/E]-K-H-K region spans residues 133-142; that stretch reads EEKHKEDKHK. A mediates association with membranes and could form transmembrane domains region spans residues 149–214; sequence LTAADVVKQW…PLVFRECIDF (66 aa). Residues 187–383 form the Rho-GAP domain; sequence IPLIEAAERT…PLRWSNMATM (197 aa). The segment at 398–495 is mediates interaction with RALA and RALB; sequence RRQEFLLNCL…LTEQEELVAM (98 aa). Position 413–420 (413–420) interacts with ATP; that stretch reads AGVKDLSK. A required to maintain nuclear localization region spans residues 494–510; sequence AMEQYLRRQIATEKEEI. The tract at residues 496–655 is mediates interaction with REPS1 and REPS2; sequence EQYLRRQIAT…GKKLSSETLI (160 aa). 2 disordered regions span residues 520-548 and 600-655; these read IQSR…EEEL and LQEE…ETLI. Over residues 532-548 the composition is skewed to acidic residues; sequence EEYSSESESESEDEEEL. Positions 619–630 are enriched in basic and acidic residues; sequence NLPETKAPKDQP.

As to quaternary structure, interacts with the active, GTP-bound form of ralB and ralA.

The protein localises to the cell membrane. It is found in the cytoplasm. The protein resides in the cytosol. Its subcellular location is the cytoskeleton. It localises to the spindle pole. The protein localises to the nucleus. It is found in the mitochondrion. The protein resides in the cell projection. Its subcellular location is the lamellipodium. The catalysed reaction is an S-substituted glutathione(in) + ATP + H2O = an S-substituted glutathione(out) + ADP + phosphate + H(+). The enzyme catalyses ATP + H2O + xenobioticSide 1 = ADP + phosphate + xenobioticSide 2.. It catalyses the reaction leukotriene C4(in) + ATP + H2O = leukotriene C4(out) + ADP + phosphate + H(+). In terms of biological role, multifunctional protein that functions as a downstream effector of ralA and ralB. As a GTPase-activating protein/GAP can inactivate CDC42 and RAC1 by stimulating their GTPase activity. As part of the Ral signaling pathway, may also regulate ligand-dependent EGF and insulin receptors-mediated endocytosis. During mitosis, may act as a scaffold protein in the phosphorylation of EPSIN/EPN1 by the mitotic kinase cyclin B-CDK1, preventing endocytosis during that phase of the cell cycle. During mitosis, also controls mitochondrial fission as an effector of ralA. Recruited to mitochondrion by ralA, acts as a scaffold to foster the mitotic kinase cyclin B-CDK1-mediated phosphorylation and activation of DNM1L. Acts on the cytoskeleton, to regulate pigment distribution and to regulate gastrulation. Its function is as follows. Could also function as a primary ATP-dependent active transporter for glutathione conjugates of electrophiles. May also actively catalyze the efflux of a wide range of substrates including xenobiotics like doxorubicin (DOX) contributing to cell multidrug resistance. The sequence is that of RalA-binding protein 1-A (ralbp1-a) from Xenopus laevis (African clawed frog).